Here is a 232-residue protein sequence, read N- to C-terminus: MAVDNFLFGQCILYFLAFLFGFIAVVPLSENGDDFQGKCLLFTEGIWQNENMTMGKQRFIVEEWGPESSCRFITFVGIVSLILSAVQAWRTFFFLCKGHDDSLFHSFLNLLLSLLVLFVVFVAGTISSVGFSIWCDSVTENGAMPSSCEDLQDTDLELGVENSSFYDQFAIAQFGLWSAWLCWLGLTVLAFLKVYHNHRQQELLESLVQEKELLLGHPLQRSSYVYNRNAMI.

A helical membrane pass occupies residues 6-26 (FLFGQCILYFLAFLFGFIAVV). N51 carries N-linked (GlcNAc...) asparagine glycosylation. 2 helical membrane passes run 75–95 (FVGIVSLILSAVQAWRTFFFL) and 114–134 (LLVLFVVFVAGTISSVGFSIW). A glycan (N-linked (GlcNAc...) asparagine) is linked at N162. A helical membrane pass occupies residues 169–189 (FAIAQFGLWSAWLCWLGLTVL).

This sequence belongs to the TMEM179 family.

The protein localises to the membrane. This chain is Transmembrane protein 179 (tmem179), found in Danio rerio (Zebrafish).